Reading from the N-terminus, the 185-residue chain is Orotate phosphoribosyltransferase (185 aa).

5-phospho-alpha-D-ribose 1-diphosphate contacts are provided by residues R102, K103, K106, H108, and 128-136 (DDVITTGGS). Orotate is bound by residues T132 and R160.

Belongs to the purine/pyrimidine phosphoribosyltransferase family. PyrE subfamily. As to quaternary structure, homodimer. Requires Mg(2+) as cofactor.

The enzyme catalyses orotidine 5'-phosphate + diphosphate = orotate + 5-phospho-alpha-D-ribose 1-diphosphate. It participates in pyrimidine metabolism; UMP biosynthesis via de novo pathway; UMP from orotate: step 1/2. Functionally, catalyzes the transfer of a ribosyl phosphate group from 5-phosphoribose 1-diphosphate to orotate, leading to the formation of orotidine monophosphate (OMP). This Leptospira biflexa serovar Patoc (strain Patoc 1 / Ames) protein is Orotate phosphoribosyltransferase.